The following is a 271-amino-acid chain: uncharacterized protein (271 aa).

2 disordered regions span residues 50-93 (KKKT…SSSL) and 128-233 (KNNY…RKKV). Low complexity-rich tracts occupy residues 61 to 93 (SPTK…SSSL) and 129 to 165 (NNYN…NNNN). Residues 169-179 (TDKKEGEKNEN) are compositionally biased toward basic and acidic residues. 2 stretches are compositionally biased toward acidic residues: residues 180 to 199 (ENEN…DIIE) and 207 to 217 (MDEELENEQVE).

This is an uncharacterized protein from Dictyostelium discoideum (Social amoeba).